The primary structure comprises 345 residues: MTQITLLTPDDWHLHFRDGDMLQETVPATARLFQRAIVMPNLLPPVTDAKMVTEYRERILAARPAGSTFEPLMTIFLTNNTTEQDIIDAKAAGVVAAKLYPAGATTNSDAAVKALDALFPVFEAMAKHGMLLLVHGEVTESHIDIFDREAMFIERYLARIVAAFPTLKVVFEHITTKDAADFVMSAADNVAATITPQHLLLNRNDLLVGGVRPHNFCLPVLKRSTHQEALRAAVATGSSKFFLGTDSAPHEKHRKESACGCAGCYSAWSALELYAQVFDDLGALDKLEGFASKHGPDFYGLPRNTSTVTLVKEKWTVPSEIILPNGNPIVPFFAGEEINWKVKTA.

His13 and His15 together coordinate Zn(2+). Substrate-binding positions include 15–17 and Asn41; that span reads HFR. Zn(2+)-binding residues include Lys98, His135, and His173. An N6-carboxylysine modification is found at Lys98. Residue His135 participates in substrate binding. Leu218 serves as a coordination point for substrate. Asp246 is a Zn(2+) binding site. The active site involves Asp246. The substrate site is built by His250 and Ala262.

The protein belongs to the metallo-dependent hydrolases superfamily. DHOase family. Class II DHOase subfamily. As to quaternary structure, homodimer. It depends on Zn(2+) as a cofactor.

It catalyses the reaction (S)-dihydroorotate + H2O = N-carbamoyl-L-aspartate + H(+). It functions in the pathway pyrimidine metabolism; UMP biosynthesis via de novo pathway; (S)-dihydroorotate from bicarbonate: step 3/3. Catalyzes the reversible cyclization of carbamoyl aspartate to dihydroorotate. The polypeptide is Dihydroorotase (Shewanella pealeana (strain ATCC 700345 / ANG-SQ1)).